A 430-amino-acid polypeptide reads, in one-letter code: Enolase (430 aa).

(2R)-2-phosphoglycerate is bound at residue glutamine 165. Residue glutamate 207 is the Proton donor of the active site. Mg(2+)-binding residues include aspartate 244, glutamate 287, and aspartate 314. Lysine 339, arginine 368, serine 369, and lysine 390 together coordinate (2R)-2-phosphoglycerate. The active-site Proton acceptor is lysine 339.

This sequence belongs to the enolase family. As to quaternary structure, component of the RNA degradosome, a multiprotein complex involved in RNA processing and mRNA degradation. The cofactor is Mg(2+).

The protein resides in the cytoplasm. It is found in the secreted. It localises to the cell surface. It carries out the reaction (2R)-2-phosphoglycerate = phosphoenolpyruvate + H2O. It functions in the pathway carbohydrate degradation; glycolysis; pyruvate from D-glyceraldehyde 3-phosphate: step 4/5. Catalyzes the reversible conversion of 2-phosphoglycerate (2-PG) into phosphoenolpyruvate (PEP). It is essential for the degradation of carbohydrates via glycolysis. This chain is Enolase, found in Xanthomonas euvesicatoria pv. vesicatoria (strain 85-10) (Xanthomonas campestris pv. vesicatoria).